The chain runs to 206 residues: Phosphoribosyl-dephospho-CoA transferase (206 aa).

Active-site residues include Asp-131 and Asp-133.

The protein belongs to the MdcG family.

It carries out the reaction apo-[malonate decarboxylase ACP] + 2'-(5''-triphospho-alpha-D-ribosyl)-3'-dephospho-CoA = holo-[malonate decarboxylase ACP] + diphosphate. Its function is as follows. Transfers 2'-(5-triphosphoribosyl)-3'-dephosphocoenzyme-A to the apo-[acyl-carrier-protein] of the malonate decarboxylase to yield holo-[acyl-carrier-protein]. In Pseudomonas fluorescens (strain Pf0-1), this protein is Phosphoribosyl-dephospho-CoA transferase.